A 466-amino-acid chain; its full sequence is 23S rRNA (uracil(1939)-C(5))-methyltransferase RlmD (466 aa).

The TRAM domain maps to 1–54 (MVDVLNIESLDLEARGIAHRDGKVLFVEGALPGERVTVQTVRRKPSYEIAKVEE). Cysteine 67, cysteine 73, cysteine 76, and cysteine 155 together coordinate [4Fe-4S] cluster. S-adenosyl-L-methionine is bound by residues glutamine 264, phenylalanine 293, asparagine 298, glutamate 314, asparagine 342, and aspartate 363. Cysteine 393 (nucleophile) is an active-site residue.

It belongs to the class I-like SAM-binding methyltransferase superfamily. RNA M5U methyltransferase family. RlmD subfamily.

The enzyme catalyses uridine(1939) in 23S rRNA + S-adenosyl-L-methionine = 5-methyluridine(1939) in 23S rRNA + S-adenosyl-L-homocysteine + H(+). In terms of biological role, catalyzes the formation of 5-methyl-uridine at position 1939 (m5U1939) in 23S rRNA. This is 23S rRNA (uracil(1939)-C(5))-methyltransferase RlmD from Bordetella bronchiseptica (strain ATCC BAA-588 / NCTC 13252 / RB50) (Alcaligenes bronchisepticus).